Reading from the N-terminus, the 84-residue chain is U8-theraphotoxin-Hhn1f (84 aa).

A signal peptide spans 1–21 (MKVVLLVCLVWMMAMMELVSC). Cystine bridges form between cysteine 23–cysteine 35, cysteine 29–cysteine 44, cysteine 34–cysteine 67, cysteine 54–cysteine 75, and cysteine 69–cysteine 81.

It belongs to the AVIT (prokineticin) family. Expressed by the venom gland.

Its subcellular location is the secreted. This Cyriopagopus hainanus (Chinese bird spider) protein is U8-theraphotoxin-Hhn1f.